A 151-amino-acid polypeptide reads, in one-letter code: UPF0208 membrane protein Ent638_2839 (151 aa).

Helical transmembrane passes span 46–65 (YAIR…QIAL) and 69–91 (LGPA…WWLG).

It belongs to the UPF0208 family.

The protein resides in the cell inner membrane. The sequence is that of UPF0208 membrane protein Ent638_2839 from Enterobacter sp. (strain 638).